A 521-amino-acid polypeptide reads, in one-letter code: Type-1 glutamine synthetase 2 (521 aa).

One can recognise a GS beta-grasp domain in the interval 76–176 (NQIKISKSPF…FLMDFIGTNG (101 aa)). Residues 183-521 (PRSTLKKVIK…WELERYLEII (339 aa)) enclose the GS catalytic domain.

The protein belongs to the glutamine synthetase family.

It catalyses the reaction L-glutamate + NH4(+) + ATP = L-glutamine + ADP + phosphate + H(+). This is Type-1 glutamine synthetase 2 (glnA2) from Dictyostelium discoideum (Social amoeba).